The following is a 427-amino-acid chain: Glutamyl-tRNA(Gln) amidotransferase subunit D (427 aa).

The segment covering 1 to 18 (MTADPGDRVRVTHGDASH) has biased composition (basic and acidic residues). The interval 1 to 20 (MTADPGDRVRVTHGDASHEG) is disordered. Positions 80 to 413 (PTIALISTGG…DDPEAAMQES (334 aa)) constitute an Asparaginase/glutaminase domain. Catalysis depends on residues Thr90, Thr166, Asp167, and Lys243.

This sequence belongs to the asparaginase 1 family. GatD subfamily. In terms of assembly, heterodimer of GatD and GatE.

It carries out the reaction L-glutamyl-tRNA(Gln) + L-glutamine + ATP + H2O = L-glutaminyl-tRNA(Gln) + L-glutamate + ADP + phosphate + H(+). Allows the formation of correctly charged Gln-tRNA(Gln) through the transamidation of misacylated Glu-tRNA(Gln) in organisms which lack glutaminyl-tRNA synthetase. The reaction takes place in the presence of glutamine and ATP through an activated gamma-phospho-Glu-tRNA(Gln). The GatDE system is specific for glutamate and does not act on aspartate. The polypeptide is Glutamyl-tRNA(Gln) amidotransferase subunit D (Halobacterium salinarum (strain ATCC 29341 / DSM 671 / R1)).